The primary structure comprises 447 residues: Lipid II isoglutaminyl synthase (glutamine-hydrolyzing) subunit MurT (447 aa).

Residues C205, C208, C227, and C230 each contribute to the Zn(2+) site. Residue D355 is part of the active site.

This sequence belongs to the MurCDEF family. MurT subfamily. As to quaternary structure, forms a heterodimer with GatD.

It carries out the reaction beta-D-GlcNAc-(1-&gt;4)-Mur2Ac(oyl-L-Ala-gamma-D-Glu-L-Lys-D-Ala-D-Ala)-di-trans,octa-cis-undecaprenyl diphosphate + L-glutamine + ATP + H2O = beta-D-GlcNAc-(1-&gt;4)-Mur2Ac(oyl-L-Ala-D-isoglutaminyl-L-Lys-D-Ala-D-Ala)-di-trans,octa-cis-undecaprenyl diphosphate + L-glutamate + ADP + phosphate + H(+). The enzyme catalyses beta-D-GlcNAc-(1-&gt;4)-Mur2Ac(oyl-L-Ala-gamma-D-Glu-L-Lys-D-Ala-D-Ala)-di-trans,octa-cis-undecaprenyl diphosphate + ATP = beta-D-GlcNAc-(1-&gt;4)-Mur2Ac(oyl-L-Ala-gamma-D-O-P-Glu-L-Lys-D-Ala-D-Ala)-di-trans,octa-cis-undecaprenyl diphosphate + ADP. It catalyses the reaction beta-D-GlcNAc-(1-&gt;4)-Mur2Ac(oyl-L-Ala-gamma-D-O-P-Glu-L-Lys-D-Ala-D-Ala)-di-trans,octa-cis-undecaprenyl diphosphate + NH4(+) = beta-D-GlcNAc-(1-&gt;4)-Mur2Ac(oyl-L-Ala-D-isoglutaminyl-L-Lys-D-Ala-D-Ala)-di-trans,octa-cis-undecaprenyl diphosphate + phosphate + H(+). It participates in cell wall biogenesis; peptidoglycan biosynthesis. Its function is as follows. The lipid II isoglutaminyl synthase complex catalyzes the formation of alpha-D-isoglutamine in the cell wall lipid II stem peptide. The MurT subunit catalyzes the ATP-dependent amidation of D-glutamate residue of lipid II, converting it to an isoglutamine residue. The sequence is that of Lipid II isoglutaminyl synthase (glutamine-hydrolyzing) subunit MurT from Streptococcus pneumoniae (strain ATCC BAA-255 / R6).